The sequence spans 752 residues: Photosystem I P700 chlorophyll a apoprotein A1 (752 aa).

Transmembrane regions (helical) follow at residues 73 to 96 (IFSA…FHGA), 159 to 182 (LYCT…FHYH), 198 to 222 (MNHH…HLSL), 294 to 312 (TAHH…GHMY), 349 to 372 (WHAQ…HHMY), 388 to 414 (LSLF…IFMV), 436 to 458 (AIVS…LYIH), and 533 to 551 (FMVH…LILV). [4Fe-4S] cluster is bound by residues Cys575 and Cys584. A run of 2 helical transmembrane segments spans residues 591-612 (HVFL…HFSW) and 666-688 (LSAY…MFLF). His677 contributes to the chlorophyll a' binding site. Chlorophyll a is bound by residues Met685 and Tyr693. Trp694 contacts phylloquinone. The helical transmembrane segment at 726-746 (AVGVAHYLLGGIGTTWAFFLA) threads the bilayer.

Belongs to the PsaA/PsaB family. As to quaternary structure, the PsaA/B heterodimer binds the P700 chlorophyll special pair and subsequent electron acceptors. PSI consists of a core antenna complex that captures photons, and an electron transfer chain that converts photonic excitation into a charge separation. The eukaryotic PSI reaction center is composed of at least 11 subunits. It depends on P700 is a chlorophyll a/chlorophyll a' dimer, A0 is one or more chlorophyll a, A1 is one or both phylloquinones and FX is a shared 4Fe-4S iron-sulfur center. as a cofactor.

It localises to the plastid. The protein localises to the chloroplast thylakoid membrane. It carries out the reaction reduced [plastocyanin] + hnu + oxidized [2Fe-2S]-[ferredoxin] = oxidized [plastocyanin] + reduced [2Fe-2S]-[ferredoxin]. In terms of biological role, psaA and PsaB bind P700, the primary electron donor of photosystem I (PSI), as well as the electron acceptors A0, A1 and FX. PSI is a plastocyanin/cytochrome c6-ferredoxin oxidoreductase, converting photonic excitation into a charge separation, which transfers an electron from the donor P700 chlorophyll pair to the spectroscopically characterized acceptors A0, A1, FX, FA and FB in turn. Oxidized P700 is reduced on the lumenal side of the thylakoid membrane by plastocyanin or cytochrome c6. This chain is Photosystem I P700 chlorophyll a apoprotein A1, found in Porphyra purpurea (Red seaweed).